The sequence spans 400 residues: Phosphoglycerate kinase (400 aa).

Residues 21-23 (DFN), Arg36, 59-62 (HLGR), Arg118, and Arg151 each bind substrate. ATP is bound by residues Lys201, Gly293, Glu324, and 353–356 (GGDS).

Belongs to the phosphoglycerate kinase family. As to quaternary structure, monomer.

It localises to the cytoplasm. The enzyme catalyses (2R)-3-phosphoglycerate + ATP = (2R)-3-phospho-glyceroyl phosphate + ADP. The protein operates within carbohydrate degradation; glycolysis; pyruvate from D-glyceraldehyde 3-phosphate: step 2/5. This is Phosphoglycerate kinase from Fervidobacterium nodosum (strain ATCC 35602 / DSM 5306 / Rt17-B1).